The primary structure comprises 313 residues: Dihydroorotate dehydrogenase B (NAD(+)), catalytic subunit (313 aa).

Residues Ser-21 and 45 to 46 (KA) each bind FMN. Residues Lys-45 and 69-73 (NAIGL) contribute to the substrate site. The FMN site is built by Asn-99 and Asn-127. Asn-127 is a binding site for substrate. The active-site Nucleophile is the Cys-130. The FMN site is built by Lys-165 and Ile-191. Substrate is bound at residue 192–193 (NT). Residues Gly-217, 243 to 244 (GG), and 265 to 266 (GT) contribute to the FMN site.

Belongs to the dihydroorotate dehydrogenase family. Type 1 subfamily. As to quaternary structure, heterotetramer of 2 PyrK and 2 PyrD type B subunits. The cofactor is FMN.

Its subcellular location is the cytoplasm. The catalysed reaction is (S)-dihydroorotate + NAD(+) = orotate + NADH + H(+). It participates in pyrimidine metabolism; UMP biosynthesis via de novo pathway; orotate from (S)-dihydroorotate (NAD(+) route): step 1/1. Functionally, catalyzes the conversion of dihydroorotate to orotate with NAD(+) as electron acceptor. In Geobacillus sp. (strain WCH70), this protein is Dihydroorotate dehydrogenase B (NAD(+)), catalytic subunit (pyrD).